A 139-amino-acid chain; its full sequence is Hydrogenase maturation factor HypA (139 aa).

Residue H2 coordinates Ni(2+). Zn(2+) contacts are provided by C73, C76, C110, and C113.

This sequence belongs to the HypA/HybF family.

Functionally, involved in the maturation of [NiFe] hydrogenases. Required for nickel insertion into the metal center of the hydrogenase. This Pyrococcus furiosus (strain ATCC 43587 / DSM 3638 / JCM 8422 / Vc1) protein is Hydrogenase maturation factor HypA.